Consider the following 669-residue polypeptide: DNA ligase (669 aa).

NAD(+)-binding positions include Asp-33–Asp-37, Ser-82–Leu-83, and Glu-114. Catalysis depends on Lys-116, which acts as the N6-AMP-lysine intermediate. Residues Arg-137, Glu-174, Lys-291, and Lys-315 each contribute to the NAD(+) site. Zn(2+)-binding residues include Cys-409, Cys-412, Cys-427, and Cys-433. A BRCT domain is found at Glu-593–Leu-669.

Belongs to the NAD-dependent DNA ligase family. LigA subfamily. It depends on Mg(2+) as a cofactor. Mn(2+) serves as cofactor.

It carries out the reaction NAD(+) + (deoxyribonucleotide)n-3'-hydroxyl + 5'-phospho-(deoxyribonucleotide)m = (deoxyribonucleotide)n+m + AMP + beta-nicotinamide D-nucleotide.. Its function is as follows. DNA ligase that catalyzes the formation of phosphodiester linkages between 5'-phosphoryl and 3'-hydroxyl groups in double-stranded DNA using NAD as a coenzyme and as the energy source for the reaction. It is essential for DNA replication and repair of damaged DNA. This chain is DNA ligase, found in Vibrio vulnificus (strain CMCP6).